We begin with the raw amino-acid sequence, 127 residues long: Small ribosomal subunit protein uS11 (127 aa).

It belongs to the universal ribosomal protein uS11 family. In terms of assembly, part of the 30S ribosomal subunit. Interacts with proteins S7 and S18. Binds to IF-3.

In terms of biological role, located on the platform of the 30S subunit, it bridges several disparate RNA helices of the 16S rRNA. Forms part of the Shine-Dalgarno cleft in the 70S ribosome. The protein is Small ribosomal subunit protein uS11 of Prosthecochloris aestuarii (strain DSM 271 / SK 413).